A 504-amino-acid polypeptide reads, in one-letter code: GTPase Der (504 aa).

One can recognise an EngA-type G 1 domain in the interval 3–166 (PVVALVGRPN…QVLAPLAEKL (164 aa)). Residues 9–16 (GRPNVGKS), 56–60 (DTGGI), and 118–121 (NKTD) each bind GTP. The interval 171–190 (VDSDENVADDEQDEWDSDFD) is disordered. The segment covering 172–190 (DSDENVADDEQDEWDSDFD) has biased composition (acidic residues). The region spanning 216-389 (IKIAIVGRPN…SIQEAYQCAT (174 aa)) is the EngA-type G 2 domain. GTP contacts are provided by residues 222 to 229 (GRPNVGKS), 269 to 273 (DTAGV), and 334 to 337 (NKWD). The KH-like domain maps to 390–474 (KKMTTSMLTR…PIRVLFQEGN (85 aa)).

It belongs to the TRAFAC class TrmE-Era-EngA-EngB-Septin-like GTPase superfamily. EngA (Der) GTPase family. In terms of assembly, associates with the 50S ribosomal subunit.

Its function is as follows. GTPase that plays an essential role in the late steps of ribosome biogenesis. The sequence is that of GTPase Der from Glaesserella parasuis serovar 5 (strain SH0165) (Haemophilus parasuis).